We begin with the raw amino-acid sequence, 177 residues long: MMRRVEDLLKDKIPYGILSNTHGLNGDLKLYLFSNMPELVEKITEAVAYNESQKKFVIVKFSKVRKASDYFIVHLTGIDTISEAEKLKGFIIYLDKSFFPKSKDGEYYFFEILNAEVYDNAGEFIGIVEDIIETGNNDVIVVKKEKEEVLIPVIERYILKIDKEAKKIIVNMPEWLE.

The PRC barrel domain maps to aspartate 104 to leucine 176.

It belongs to the RimM family. Binds ribosomal protein uS19.

The protein localises to the cytoplasm. Functionally, an accessory protein needed during the final step in the assembly of 30S ribosomal subunit, possibly for assembly of the head region. Essential for efficient processing of 16S rRNA. May be needed both before and after RbfA during the maturation of 16S rRNA. It has affinity for free ribosomal 30S subunits but not for 70S ribosomes. The sequence is that of Ribosome maturation factor RimM from Fervidobacterium nodosum (strain ATCC 35602 / DSM 5306 / Rt17-B1).